The following is a 289-amino-acid chain: MFFQDIIQNLNKFWSEEGCLIMQPYDTEKGAGTMNPHTFLRAIGPEPWSVAYAEPCRRPTDGRFGDNPNRAQHYFQYQVIIKPSPDRIQEKYLSSLEFLGINPKEHDIRFVEDNWESPTLGAWGVGWEVWLDGMEVTQFTYFQQCGGVDCNPIPIEITYGLERIATFLQDKESIWDLDWNKDFNYSDIWLQFEKNQCEFNFRASNPENMRKLFSIYQEEAVSLLDKKLTFPALDFVLKCSHCFNLLDARGVISVTDRAQYIEKIRKLAREVASSWIIERESLKFPLLKK.

This sequence belongs to the class-II aminoacyl-tRNA synthetase family. As to quaternary structure, tetramer of two alpha and two beta subunits.

It is found in the cytoplasm. It catalyses the reaction tRNA(Gly) + glycine + ATP = glycyl-tRNA(Gly) + AMP + diphosphate. This Prochlorococcus marinus (strain MIT 9515) protein is Glycine--tRNA ligase alpha subunit.